Reading from the N-terminus, the 535-residue chain is MTKYIFVTGGVVSSLGKGITAASLGRLLKNRGLNVTIQKFDPYINVDPGTMSPYQHGEVFVTDDGAETDLDLGHYERFIDINLNKYSNVTTGKIYSSVLQKERRGEYLGGTVQVIPHITNEIKERVFRAGRETNADVVITEIGGTVGDIESLPFLEAIRQIKSDIGRDNVMYIHCTLIPYLKAAGEMKTKPTQHSVKELRSLGIQPNIIVVRTEMPVSQDMKDKLALFCDIDPKAVIEAADADTLYAVPLSLQEQNMDQIVCDHLKLDNAPADMTEWKALVDKVRNLSKKTRIALVGKYVELQDAYISVVEALRHAGYTFDTDVEVKWVNAEHVTAENVKELVGDTDGILVPGGFGDRGVEGKIVAIQYARENKVPFLGICLGMQLASIEFARNVLGLEGANSSEINPDTPYAIIDLLPEQKDVEDLGGTLRLGLYPCKLTPETNAYRAYNEPVVYERHRHRYEFNNQFRQEMENAGFIFSGTSPDGRLVEIVELQDHPWFVAAQFHPELVSRPNRPQPLFRDFVQASITNKESK.

Residues 1-267 form an amidoligase domain region; it reads MTKYIFVTGG…DQIVCDHLKL (267 aa). Ser13 is a binding site for CTP. Ser13 serves as a coordination point for UTP. 14–19 provides a ligand contact to ATP; the sequence is SLGKGI. L-glutamine is bound at residue Tyr54. Asp71 serves as a coordination point for ATP. 2 residues coordinate Mg(2+): Asp71 and Glu141. CTP contacts are provided by residues 148-150, 188-193, and Lys224; these read DIE and KTKPTQ. UTP-binding positions include 188–193 and Lys224; that span reads KTKPTQ. In terms of domain architecture, Glutamine amidotransferase type-1 spans 292 to 534; that stretch reads RIALVGKYVE…VQASITNKES (243 aa). Gly354 contacts L-glutamine. Catalysis depends on Cys381, which acts as the Nucleophile; for glutamine hydrolysis. Residues 382-385, Glu405, and Arg462 contribute to the L-glutamine site; that span reads LGMQ. Residues His507 and Glu509 contribute to the active site.

The protein belongs to the CTP synthase family. As to quaternary structure, homotetramer.

It carries out the reaction UTP + L-glutamine + ATP + H2O = CTP + L-glutamate + ADP + phosphate + 2 H(+). The catalysed reaction is L-glutamine + H2O = L-glutamate + NH4(+). The enzyme catalyses UTP + NH4(+) + ATP = CTP + ADP + phosphate + 2 H(+). The protein operates within pyrimidine metabolism; CTP biosynthesis via de novo pathway; CTP from UDP: step 2/2. Its activity is regulated as follows. Allosterically activated by GTP, when glutamine is the substrate; GTP has no effect on the reaction when ammonia is the substrate. The allosteric effector GTP functions by stabilizing the protein conformation that binds the tetrahedral intermediate(s) formed during glutamine hydrolysis. Inhibited by the product CTP, via allosteric rather than competitive inhibition. Functionally, catalyzes the ATP-dependent amination of UTP to CTP with either L-glutamine or ammonia as the source of nitrogen. Regulates intracellular CTP levels through interactions with the four ribonucleotide triphosphates. In Bacillus cytotoxicus (strain DSM 22905 / CIP 110041 / 391-98 / NVH 391-98), this protein is CTP synthase.